Consider the following 348-residue polypeptide: Macrophage-capping protein (348 aa).

Position 1 is an N-acetylmethionine (Met-1). A Gelsolin-like 1 repeat occupies 27–75 (EKLKPVPVAQENQGVFFSGDSYLVLHNGPEEVSHLHLWIGQQSSRDEQG). A Nuclear localization signal motif is present at residues 137 to 146 (KKLYQVKGKK). 2 Gelsolin-like repeats span residues 148–188 (IRAT…LERN) and 261–307 (MNLT…KERQ). Ser-337 is subject to Phosphoserine.

Belongs to the villin/gelsolin family. In terms of assembly, interacts with NUP62. Interacts with NUTF2 and RAN; involved in CAPG nuclear import. Post-translationally, the N-terminus is blocked. As to expression, macrophages and macrophage-like cells.

It localises to the nucleus. The protein localises to the cytoplasm. It is found in the melanosome. Its subcellular location is the cell projection. The protein resides in the lamellipodium. It localises to the ruffle. In terms of biological role, calcium-sensitive protein which reversibly blocks the barbed ends of actin filaments but does not sever preformed actin filaments. May play an important role in macrophage function. May play a role in regulating cytoplasmic and/or nuclear structures through potential interactions with actin. May bind DNA. This chain is Macrophage-capping protein (CAPG), found in Homo sapiens (Human).